We begin with the raw amino-acid sequence, 111 residues long: Translation initiation factor 1A 1 (111 aa).

The interval 1–28 is disordered; it reads MTLADLKKPTSRASPSTEETVTRVRTPR. Residues 22–96 form the S1-like domain; sequence TRVRTPRREN…EKADVIWKYT (75 aa).

The protein belongs to the eIF-1A family.

Its function is as follows. Seems to be required for maximal rate of protein biosynthesis. Enhances ribosome dissociation into subunits and stabilizes the binding of the initiator Met-tRNA(I) to 40 S ribosomal subunits. The chain is Translation initiation factor 1A 1 (eIF1A1) from Methanosarcina mazei (strain ATCC BAA-159 / DSM 3647 / Goe1 / Go1 / JCM 11833 / OCM 88) (Methanosarcina frisia).